The following is a 525-amino-acid chain: M-phase inducer phosphatase 1 (525 aa).

Positions 1 to 42 are disordered; the sequence is MELGPEPPHRRRLLFTCSPTPAPQPTGKVQFGASRAGGLSPV. The Phosphodegron signature appears at 74–84; it reads MGSSESTDSGF. Ser76 carries the post-translational modification Phosphoserine; by CHEK1. 3 positions are modified to phosphoserine; by NEK11: Ser79, Ser82, and Ser88. The residue at position 124 (Ser124) is a Phosphoserine; by CHEK1 and CHEK2. A KEN box motif is present at residues 141–143; sequence KEN. Phosphoserine; by CHEK1 is present on Ser178. The segment at 260-318 is disordered; the sequence is FDSPSPCSSTSSCSTRAVKRADRSHEESPRGTKRRKSSEASPVKADVPEPTQLPHQSLS. Low complexity predominate over residues 262–274; that stretch reads SPSPCSSTSSCST. A compositionally biased stretch (basic and acidic residues) spans 278–289; that stretch reads KRADRSHEESPR. A phosphoserine; by CHEK1 and CHEK2 mark is found at Ser283 and Ser296. The region spanning 377–483 is the Rhodanese domain; that stretch reads LIKEFVIIDC…FFLKCQSHCE (107 aa). Residue Cys432 is part of the active site. At Thr508 the chain carries Phosphothreonine; by CHEK1. Ser514 and Ser520 each carry phosphoserine; by PLK3.

Belongs to the MPI phosphatase family. In terms of assembly, interacts with CCNB1/cyclin B1. Interacts with YWHAE/14-3-3 epsilon when phosphorylated. Interacts with CUL1 specifically when CUL1 is neddylated and active. Interacts with BTRC/BTRCP1 and FBXW11/BTRCP2. Interactions with CUL1, BTRC and FBXW11 are enhanced upon DNA damage. Interacts with CHEK2; mediates CDC25A phosphorylation and degradation in response to infrared-induced DNA damages. Interacts with HSP90AB1; prevents heat shock-mediated CDC25A degradation and contributes to cell cycle progression. Phosphorylated by CHEK1 on Ser-76, Ser-124, Ser-178, Ser-283, Ser-296 and Thr-508 during checkpoint mediated cell cycle arrest. Also phosphorylated by CHEK2 on Ser-124, Ser-283, and Ser-296 during checkpoint mediated cell cycle arrest. Phosphorylation on Ser-178 and Thr-508 creates binding sites for YWHAE/14-3-3 epsilon which inhibits CDC25A. Phosphorylation on Ser-76, Ser-124, Ser-178, Ser-283 and Ser-296 may also promote ubiquitin-dependent proteolysis of CDC25A by the SCF complex. Phosphorylation of CDC25A at Ser-76 by CHEK1 primes it for subsequent phosphorylation at Ser-79, Ser-82 and Ser-88 by NEK11. Phosphorylation by NEK11 is required for BTRC-mediated polyubiquitination and degradation. Phosphorylation by PIM1 leads to an increase in phosphatase activity. Phosphorylated by PLK3 following DNA damage, leading to promote its ubiquitination and degradation. Post-translationally, ubiquitinated by the anaphase promoting complex/cyclosome (APC/C) ubiquitin ligase complex that contains FZR1/CDH1 during G1 phase leading to its degradation by the proteasome. Ubiquitinated by a SCF complex containing BTRC and FBXW11 during S phase leading to its degradation by the proteasome. Deubiquitination by USP17L2/DUB3 leads to its stabilization.

The catalysed reaction is O-phospho-L-tyrosyl-[protein] + H2O = L-tyrosyl-[protein] + phosphate. Stimulated by B-type cyclins. Stimulated by PIM1-mediated phosphorylation. Functionally, tyrosine protein phosphatase which functions as a dosage-dependent inducer of mitotic progression. Directly dephosphorylates CDK1 and stimulates its kinase activity. Also dephosphorylates CDK2 in complex with cyclin-E, in vitro. The protein is M-phase inducer phosphatase 1 (Cdc25a) of Rattus norvegicus (Rat).